A 197-amino-acid polypeptide reads, in one-letter code: Glycerol-3-phosphate acyltransferase (197 aa).

Helical transmembrane passes span 7 to 27 (PSIAALIGYAFGSIPFGLLLT), 56 to 76 (LAALTLVLDLVKGFVPVWIAW), 82 to 102 (DIGWAALGAVVGHCFPIWLGF), 116 to 136 (FGLGWGIGLAYAFVWLVMLAI), and 157 to 177 (YFGRPTFVPPLVIIAVIIIWL).

This sequence belongs to the PlsY family. Probably interacts with PlsX.

Its subcellular location is the cell inner membrane. It catalyses the reaction an acyl phosphate + sn-glycerol 3-phosphate = a 1-acyl-sn-glycero-3-phosphate + phosphate. It functions in the pathway lipid metabolism; phospholipid metabolism. In terms of biological role, catalyzes the transfer of an acyl group from acyl-phosphate (acyl-PO(4)) to glycerol-3-phosphate (G3P) to form lysophosphatidic acid (LPA). This enzyme utilizes acyl-phosphate as fatty acyl donor, but not acyl-CoA or acyl-ACP. The protein is Glycerol-3-phosphate acyltransferase of Erythrobacter litoralis (strain HTCC2594).